A 149-amino-acid polypeptide reads, in one-letter code: Putative pre-16S rRNA nuclease (149 aa).

Belongs to the YqgF nuclease family.

It is found in the cytoplasm. Its function is as follows. Could be a nuclease involved in processing of the 5'-end of pre-16S rRNA. The sequence is that of Putative pre-16S rRNA nuclease from Burkholderia vietnamiensis (strain G4 / LMG 22486) (Burkholderia cepacia (strain R1808)).